The chain runs to 797 residues: uncharacterized protein (797 aa).

This is an uncharacterized protein from Treponema pallidum (strain Nichols).